The sequence spans 505 residues: Histidine ammonia-lyase (505 aa).

The segment at residues 141–143 is a cross-link (5-imidazolinone (Ala-Gly)); the sequence is ASG. Serine 142 is subject to 2,3-didehydroalanine (Ser).

Belongs to the PAL/histidase family. Post-translationally, contains an active site 4-methylidene-imidazol-5-one (MIO), which is formed autocatalytically by cyclization and dehydration of residues Ala-Ser-Gly.

The protein resides in the cytoplasm. The catalysed reaction is L-histidine = trans-urocanate + NH4(+). Its pathway is amino-acid degradation; L-histidine degradation into L-glutamate; N-formimidoyl-L-glutamate from L-histidine: step 1/3. The sequence is that of Histidine ammonia-lyase from Bacillus thuringiensis subsp. konkukian (strain 97-27).